The primary structure comprises 660 residues: Polyadenylate-binding protein 3 (660 aa).

RRM domains lie at Ser-49–Arg-126, Gly-136–Arg-213, Thr-229–Lys-306, and Ala-332–Arg-409. Residues Pro-571–Asp-648 form the PABC domain.

This sequence belongs to the polyadenylate-binding protein type-1 family. In terms of tissue distribution, expressed predominantly in immature flowers. Detected in tapetum and pollen. Strongly expressed in immatures siliques.

Its subcellular location is the cytoplasm. The protein resides in the nucleus. Its function is as follows. Binds the poly(A) tail of mRNA. Appears to be an important mediator of the multiple roles of the poly(A) tail in mRNA biogenesis, stability and translation. In the cytoplasm, affects both translation and mRNA decay. Inhibits the polyadenylated RNA degradation by the Rrp41p 3'--&gt;5' exonuclease in vitro. Binds with the 5'UTRs of PAB2, PAB3 and with a lower affinity with the 5'UTR of PAB5. This Arabidopsis thaliana (Mouse-ear cress) protein is Polyadenylate-binding protein 3 (PAB3).